A 435-amino-acid chain; its full sequence is Eukaryotic translation initiation factor 3 subunit E (435 aa).

The PCI domain maps to 219-392 (FFNHAKGRDL…GHVVMGTQPL (174 aa)).

This sequence belongs to the eIF-3 subunit E family. Component of the eukaryotic translation initiation factor 3 (eIF-3) complex.

The protein resides in the cytoplasm. Component of the eukaryotic translation initiation factor 3 (eIF-3) complex, which is involved in protein synthesis of a specialized repertoire of mRNAs and, together with other initiation factors, stimulates binding of mRNA and methionyl-tRNAi to the 40S ribosome. The eIF-3 complex specifically targets and initiates translation of a subset of mRNAs involved in cell proliferation. The chain is Eukaryotic translation initiation factor 3 subunit E (eIF3-S6) from Culex quinquefasciatus (Southern house mosquito).